Here is a 342-residue protein sequence, read N- to C-terminus: Protein RecA (342 aa).

65–72 (GPESSGKT) serves as a coordination point for ATP.

This sequence belongs to the RecA family.

It is found in the cytoplasm. Functionally, can catalyze the hydrolysis of ATP in the presence of single-stranded DNA, the ATP-dependent uptake of single-stranded DNA by duplex DNA, and the ATP-dependent hybridization of homologous single-stranded DNAs. It interacts with LexA causing its activation and leading to its autocatalytic cleavage. In Teredinibacter turnerae (strain ATCC 39867 / T7901), this protein is Protein RecA.